A 387-amino-acid chain; its full sequence is 1-deoxy-D-xylulose 5-phosphate reductoisomerase (387 aa).

NADPH contacts are provided by threonine 10, glycine 11, serine 12, isoleucine 13, glycine 36, asparagine 38, and asparagine 122. Lysine 123 contacts 1-deoxy-D-xylulose 5-phosphate. An NADPH-binding site is contributed by glutamate 124. Aspartate 148 contacts Mn(2+). 1-deoxy-D-xylulose 5-phosphate-binding residues include serine 149, glutamate 150, serine 174, and histidine 197. Residue glutamate 150 coordinates Mn(2+). An NADPH-binding site is contributed by glycine 203. 1-deoxy-D-xylulose 5-phosphate-binding residues include serine 210, asparagine 215, lysine 216, and glutamate 219. Glutamate 219 is a Mn(2+) binding site.

It belongs to the DXR family. The cofactor is Mg(2+). It depends on Mn(2+) as a cofactor.

It carries out the reaction 2-C-methyl-D-erythritol 4-phosphate + NADP(+) = 1-deoxy-D-xylulose 5-phosphate + NADPH + H(+). The protein operates within isoprenoid biosynthesis; isopentenyl diphosphate biosynthesis via DXP pathway; isopentenyl diphosphate from 1-deoxy-D-xylulose 5-phosphate: step 1/6. Functionally, catalyzes the NADPH-dependent rearrangement and reduction of 1-deoxy-D-xylulose-5-phosphate (DXP) to 2-C-methyl-D-erythritol 4-phosphate (MEP). This chain is 1-deoxy-D-xylulose 5-phosphate reductoisomerase, found in Chloroherpeton thalassium (strain ATCC 35110 / GB-78).